Consider the following 539-residue polypeptide: Trigger factor (539 aa).

Residues 163–252 (GDQLTVQIET…VLDVQERLLP (90 aa)) enclose the PPIase FKBP-type domain. 2 stretches are compositionally biased toward low complexity: residues 434 to 447 (SFEQAASPEAASEP) and 475 to 484 (AASPEAASEP). A disordered region spans residues 434–539 (SFEQAASPEA…DVATPEARTE (106 aa)). Residues 509–528 (TETPIVSQEENGESVENQSV) are compositionally biased toward polar residues.

Belongs to the FKBP-type PPIase family. Tig subfamily.

Its subcellular location is the cytoplasm. The enzyme catalyses [protein]-peptidylproline (omega=180) = [protein]-peptidylproline (omega=0). In terms of biological role, involved in protein export. Acts as a chaperone by maintaining the newly synthesized protein in an open conformation. Functions as a peptidyl-prolyl cis-trans isomerase. This chain is Trigger factor, found in Roseiflexus sp. (strain RS-1).